The chain runs to 65 residues: MPKMKTKKSAAKRFKVRGSGSIKRGQAFKRHILTKKTTKNKRQLRGSAAVHETNVASVKAMMPFA.

A compositionally biased stretch (basic residues) spans 1–16 (MPKMKTKKSAAKRFKV). Positions 1–25 (MPKMKTKKSAAKRFKVRGSGSIKRG) are disordered.

The protein belongs to the bacterial ribosomal protein bL35 family.

The chain is Large ribosomal subunit protein bL35 from Bordetella parapertussis (strain 12822 / ATCC BAA-587 / NCTC 13253).